The sequence spans 956 residues: Translation initiation factor IF-2 (956 aa).

A disordered region spans residues 33 to 370 (SHASSVEEAD…PVTERKFHEL (338 aa)). A compositionally biased stretch (polar residues) spans 46 to 60 (IASSFSAGVTKNVQA). Basic and acidic residues predominate over residues 63-73 (AKDKQVAEQKA). Residues 76–100 (AKATTPQPAASKAAEKPAAATQEAS) are compositionally biased toward low complexity. 3 stretches are compositionally biased toward basic and acidic residues: residues 112–125 (FKAEREARAKEQVA), 134–143 (SNDRKSDYRQ), and 179–192 (NDGHRQAGNRDKNR). Low complexity predominate over residues 199–213 (RQQDTGRQGQTQAGA). Basic and acidic residues-rich tracts occupy residues 234–258 (ARQRESRFREQEEAKRLEQQARQEA) and 266–276 (QTEDKKHREAS). Over residues 277–293 (AKATESVASMAAASVAK) the composition is skewed to low complexity. Over residues 303–320 (NRPDKGHDRDHGLEDGQK) the composition is skewed to basic and acidic residues. The segment covering 325–343 (SWNSQNQVRNQKNSNWNNN) has biased composition (low complexity). Basic residues predominate over residues 344–354 (KKNKKGKHHKN). The tr-type G domain maps to 457–626 (ERAPVVTIMG…LLVAEVEELK (170 aa)). The G1 stretch occupies residues 466-473 (GHVDHGKT). Residue 466–473 (GHVDHGKT) participates in GTP binding. Positions 491-495 (GITQH) are G2. The tract at residues 512 to 515 (DTPG) is G3. GTP contacts are provided by residues 512 to 516 (DTPGH) and 566 to 569 (NKID). Residues 566–569 (NKID) form a G4 region. The G5 stretch occupies residues 602–604 (SAK).

This sequence belongs to the TRAFAC class translation factor GTPase superfamily. Classic translation factor GTPase family. IF-2 subfamily.

It is found in the cytoplasm. Functionally, one of the essential components for the initiation of protein synthesis. Protects formylmethionyl-tRNA from spontaneous hydrolysis and promotes its binding to the 30S ribosomal subunits. Also involved in the hydrolysis of GTP during the formation of the 70S ribosomal complex. This is Translation initiation factor IF-2 from Streptococcus equi subsp. equi (strain 4047).